Here is a 451-residue protein sequence, read N- to C-terminus: POU domain, class 3, transcription factor 1 (451 aa).

Disordered regions lie at residues 1–21 (MATT…GTGP), 69–114 (AHPQ…GFHA), 127–154 (AWAQ…HQPQ), 186–253 (GLHH…PSSD), and 395–451 (KRMT…GSVQ). Gly residues-rich tracts occupy residues 11–20 (GPGGGAGGTG), 76–85 (TGGGGGGDWA), and 95–112 (AGGG…GGGF). Residues 190-199 (ALHEDGHEAQ) show a composition bias toward basic and acidic residues. Positions 220 to 232 (AGGLHAAAAHLHP) are enriched in low complexity. A POU-specific domain is found at 247 to 321 (EDAPSSDDLE…LLNKWLEETD (75 aa)). A DNA-binding region (homeobox) is located at residues 339–398 (KRKKRTSIEVGVKGALESHFLKCPKPSAHEITGLADSLQLEKEVVRVWFCNRRQKEKRMT). The span at 427–436 (PSAPPPPPPA) shows a compositional bias: pro residues.

This sequence belongs to the POU transcription factor family. Class-3 subfamily. Expressed in embryonal stem cells and in the developing brain.

Its subcellular location is the nucleus. Its function is as follows. Transcription factor that binds to the octamer motif (5'-ATTTGCAT-3'). Acts as a transcriptional activator when binding cooperatively with SOX4, SOX11, or SOX12 to gene promoters. Acts as a transcriptional repressor of myelin-specific genes. The sequence is that of POU domain, class 3, transcription factor 1 (POU3F1) from Homo sapiens (Human).